The sequence spans 215 residues: Cytochrome b6 (215 aa).

The chain crosses the membrane as a helical span at residues 32–52 (IFYCLGGITLTCFLVQVATGF). A heme c-binding site is contributed by Cys35. Residues His86 and His100 each contribute to the heme b site. Transmembrane regions (helical) follow at residues 90–110 (ASMM…TGGF), 116–136 (LTWV…VTGY), and 186–206 (LHTF…FLMI). The heme b site is built by His187 and His202.

This sequence belongs to the cytochrome b family. PetB subfamily. In terms of assembly, the 4 large subunits of the cytochrome b6-f complex are cytochrome b6, subunit IV (17 kDa polypeptide, PetD), cytochrome f and the Rieske protein, while the 4 small subunits are PetG, PetL, PetM and PetN. The complex functions as a dimer. Requires heme b as cofactor. It depends on heme c as a cofactor.

Its subcellular location is the plastid. The protein localises to the chloroplast thylakoid membrane. Its function is as follows. Component of the cytochrome b6-f complex, which mediates electron transfer between photosystem II (PSII) and photosystem I (PSI), cyclic electron flow around PSI, and state transitions. This is Cytochrome b6 from Pisum sativum (Garden pea).